The primary structure comprises 357 residues: Holliday junction branch migration complex subunit RuvB (357 aa).

Residues 1–27 (MGRFSNADGPGDDADEREVTPALTVGE) are disordered. Residues 1–195 (MGRFSNADGP…FGFTAHMDFY (195 aa)) form a large ATPase domain (RuvB-L) region. ATP is bound by residues Leu-34, Arg-35, Gly-76, Lys-79, Thr-80, Ser-81, 142-144 (EDF), Arg-185, Tyr-195, and Arg-232. Position 80 (Thr-80) interacts with Mg(2+). A small ATPAse domain (RuvB-S) region spans residues 196 to 266 (EPAELERVLA…IAKYALEVYD (71 aa)). Residues 269–357 (ELGLDRLDRA…GGLGQVGLFE (89 aa)) are head domain (RuvB-H). DNA contacts are provided by Arg-324 and Arg-329.

It belongs to the RuvB family. As to quaternary structure, homohexamer. Forms an RuvA(8)-RuvB(12)-Holliday junction (HJ) complex. HJ DNA is sandwiched between 2 RuvA tetramers; dsDNA enters through RuvA and exits via RuvB. An RuvB hexamer assembles on each DNA strand where it exits the tetramer. Each RuvB hexamer is contacted by two RuvA subunits (via domain III) on 2 adjacent RuvB subunits; this complex drives branch migration. In the full resolvosome a probable DNA-RuvA(4)-RuvB(12)-RuvC(2) complex forms which resolves the HJ.

The protein resides in the cytoplasm. The enzyme catalyses ATP + H2O = ADP + phosphate + H(+). In terms of biological role, the RuvA-RuvB-RuvC complex processes Holliday junction (HJ) DNA during genetic recombination and DNA repair, while the RuvA-RuvB complex plays an important role in the rescue of blocked DNA replication forks via replication fork reversal (RFR). RuvA specifically binds to HJ cruciform DNA, conferring on it an open structure. The RuvB hexamer acts as an ATP-dependent pump, pulling dsDNA into and through the RuvAB complex. RuvB forms 2 homohexamers on either side of HJ DNA bound by 1 or 2 RuvA tetramers; 4 subunits per hexamer contact DNA at a time. Coordinated motions by a converter formed by DNA-disengaged RuvB subunits stimulates ATP hydrolysis and nucleotide exchange. Immobilization of the converter enables RuvB to convert the ATP-contained energy into a lever motion, pulling 2 nucleotides of DNA out of the RuvA tetramer per ATP hydrolyzed, thus driving DNA branch migration. The RuvB motors rotate together with the DNA substrate, which together with the progressing nucleotide cycle form the mechanistic basis for DNA recombination by continuous HJ branch migration. Branch migration allows RuvC to scan DNA until it finds its consensus sequence, where it cleaves and resolves cruciform DNA. The protein is Holliday junction branch migration complex subunit RuvB of Mycolicibacterium gilvum (strain PYR-GCK) (Mycobacterium gilvum (strain PYR-GCK)).